The following is a 493-amino-acid chain: Cobyric acid synthase (493 aa).

Residues 252–440 (PVKIVVLRLR…IHGIFESDSL (189 aa)) enclose the GATase cobBQ-type domain. The active-site Nucleophile is the Cys-333. Residue His-432 is part of the active site.

It belongs to the CobB/CobQ family. CobQ subfamily.

It participates in cofactor biosynthesis; adenosylcobalamin biosynthesis. In terms of biological role, catalyzes amidations at positions B, D, E, and G on adenosylcobyrinic A,C-diamide. NH(2) groups are provided by glutamine, and one molecule of ATP is hydrogenolyzed for each amidation. In Thermodesulfovibrio yellowstonii (strain ATCC 51303 / DSM 11347 / YP87), this protein is Cobyric acid synthase.